The following is a 131-amino-acid chain: UPF0102 protein YraN (131 aa).

This sequence belongs to the UPF0102 family.

In Salmonella agona (strain SL483), this protein is UPF0102 protein YraN.